The primary structure comprises 389 residues: Transaldolase (389 aa).

The active-site Schiff-base intermediate with substrate is Lys-136. EF-hand domains lie at Ala-330–Ile-365 and Ile-365–Leu-388. Residues Asp-343, Asp-345, Asp-347, Glu-354, Asp-366, Asn-368, Asp-370, Lys-372, and Glu-377 each contribute to the Ca(2+) site.

The protein belongs to the transaldolase family. Type 1 subfamily.

Its subcellular location is the cytoplasm. It catalyses the reaction D-sedoheptulose 7-phosphate + D-glyceraldehyde 3-phosphate = D-erythrose 4-phosphate + beta-D-fructose 6-phosphate. It participates in carbohydrate degradation; pentose phosphate pathway; D-glyceraldehyde 3-phosphate and beta-D-fructose 6-phosphate from D-ribose 5-phosphate and D-xylulose 5-phosphate (non-oxidative stage): step 2/3. Transaldolase is important for the balance of metabolites in the pentose-phosphate pathway. The polypeptide is Transaldolase (Gloeobacter violaceus (strain ATCC 29082 / PCC 7421)).